Reading from the N-terminus, the 132-residue chain is UPF0102 protein Achl_2213 (132 aa).

It belongs to the UPF0102 family.

The polypeptide is UPF0102 protein Achl_2213 (Pseudarthrobacter chlorophenolicus (strain ATCC 700700 / DSM 12829 / CIP 107037 / JCM 12360 / KCTC 9906 / NCIMB 13794 / A6) (Arthrobacter chlorophenolicus)).